We begin with the raw amino-acid sequence, 361 residues long: NAD(P)H-quinone oxidoreductase subunit 1, chloroplastic (361 aa).

6 helical membrane passes run 25-45 (IWLLVPILTLVLGITIGVLVI), 102-122 (VAVVSILLSYSVIPFGYHLVL), 125-145 (LSIGVFLWIAISSIAPIGLLM), 246-266 (YSGIKFGLFYVASYLNLLVSS), 298-318 (VFGTTISLLITLAKAYLFLFI), and 334-354 (LLNLGWKSLLPIALGNLLLTT).

Belongs to the complex I subunit 1 family. In terms of assembly, NDH is composed of at least 16 different subunits, 5 of which are encoded in the nucleus.

It is found in the plastid. The protein resides in the chloroplast thylakoid membrane. It carries out the reaction a plastoquinone + NADH + (n+1) H(+)(in) = a plastoquinol + NAD(+) + n H(+)(out). The catalysed reaction is a plastoquinone + NADPH + (n+1) H(+)(in) = a plastoquinol + NADP(+) + n H(+)(out). Functionally, NDH shuttles electrons from NAD(P)H:plastoquinone, via FMN and iron-sulfur (Fe-S) centers, to quinones in the photosynthetic chain and possibly in a chloroplast respiratory chain. The immediate electron acceptor for the enzyme in this species is believed to be plastoquinone. Couples the redox reaction to proton translocation, and thus conserves the redox energy in a proton gradient. This chain is NAD(P)H-quinone oxidoreductase subunit 1, chloroplastic, found in Nymphaea alba (White water-lily).